The primary structure comprises 404 residues: Chorismate synthase (404 aa).

Arg-43 and Arg-49 together coordinate NADP(+). FMN is bound by residues 138-140 (RAS), 259-260 (QA), Gly-303, 318-322 (KPIST), and Arg-344.

It belongs to the chorismate synthase family. As to quaternary structure, homotetramer. FMNH2 serves as cofactor.

It catalyses the reaction 5-O-(1-carboxyvinyl)-3-phosphoshikimate = chorismate + phosphate. It participates in metabolic intermediate biosynthesis; chorismate biosynthesis; chorismate from D-erythrose 4-phosphate and phosphoenolpyruvate: step 7/7. Functionally, catalyzes the anti-1,4-elimination of the C-3 phosphate and the C-6 proR hydrogen from 5-enolpyruvylshikimate-3-phosphate (EPSP) to yield chorismate, which is the branch point compound that serves as the starting substrate for the three terminal pathways of aromatic amino acid biosynthesis. This reaction introduces a second double bond into the aromatic ring system. The protein is Chorismate synthase of Mycolicibacterium paratuberculosis (strain ATCC BAA-968 / K-10) (Mycobacterium paratuberculosis).